We begin with the raw amino-acid sequence, 146 residues long: Myoglobin (146 aa).

The region spanning 2 to 141 (GDFDMVLKFW…IIADIDATYK (140 aa)) is the Globin domain. His-60 lines the nitrite pocket. Residue His-60 coordinates O2. Position 89 (His-89) interacts with heme b.

This sequence belongs to the globin family. As to quaternary structure, monomeric.

It localises to the cytoplasm. Its subcellular location is the sarcoplasm. It catalyses the reaction Fe(III)-heme b-[protein] + nitric oxide + H2O = Fe(II)-heme b-[protein] + nitrite + 2 H(+). It carries out the reaction H2O2 + AH2 = A + 2 H2O. In terms of biological role, monomeric heme protein which primary function is to store oxygen and facilitate its diffusion within muscle tissues. Reversibly binds oxygen through a pentacoordinated heme iron and enables its timely and efficient release as needed during periods of heightened demand. Depending on the oxidative conditions of tissues and cells, and in addition to its ability to bind oxygen, it also has a nitrite reductase activity whereby it regulates the production of bioactive nitric oxide. Under stress conditions, like hypoxia and anoxia, it also protects cells against reactive oxygen species thanks to its pseudoperoxidase activity. This Tetraodon nigroviridis (Spotted green pufferfish) protein is Myoglobin (mb).